The chain runs to 360 residues: Dihydroorotate dehydrogenase (quinone) (360 aa).

Residues 65 to 69 and threonine 89 contribute to the FMN site; that span reads AGLDK. Lysine 69 contacts substrate. Residue 114 to 118 participates in substrate binding; sequence NRLGF. Residues asparagine 147 and asparagine 180 each contribute to the FMN site. Asparagine 180 provides a ligand contact to substrate. Residue serine 183 is the Nucleophile of the active site. Asparagine 185 contributes to the substrate binding site. The FMN site is built by lysine 225 and threonine 253. Residue 254-255 participates in substrate binding; that stretch reads NT. Residues glycine 276, glycine 305, and 326-327 contribute to the FMN site; that span reads YT.

It belongs to the dihydroorotate dehydrogenase family. Type 2 subfamily. As to quaternary structure, monomer. Requires FMN as cofactor.

It is found in the cell membrane. It catalyses the reaction (S)-dihydroorotate + a quinone = orotate + a quinol. It participates in pyrimidine metabolism; UMP biosynthesis via de novo pathway; orotate from (S)-dihydroorotate (quinone route): step 1/1. Catalyzes the conversion of dihydroorotate to orotate with quinone as electron acceptor. This Verminephrobacter eiseniae (strain EF01-2) protein is Dihydroorotate dehydrogenase (quinone).